Here is a 176-residue protein sequence, read N- to C-terminus: MKSLYFVAGLLVMLAQGSWQHSLQNTEEKSSSFPAPQTDPLGDPDQISEDKRHSQGTFTSDYSKYLDSRRAQDFVQWLMNTKRNKNNIAKRHDEFERHAEGTFTSDVSSYLEGQAAKEFIAWLVKGRGRRDFPEEVNIVEELRRRHADGSFSDEMNTVLDSLATRDFINWLLQTKI.

The N-terminal stretch at 1-20 is a signal peptide; that stretch reads MKSLYFVAGLLVMLAQGSWQ. Residues 25–35 show a composition bias toward polar residues; it reads NTEEKSSSFPA. Residues 25 to 59 are disordered; that stretch reads NTEEKSSSFPAPQTDPLGDPDQISEDKRHSQGTFT. A Phosphoserine modification is found at S54. A propeptide spanning residues 84 to 89 is cleaved from the precursor; that stretch reads NKNNIA. 2 positions are modified to phosphoserine: S105 and S108. Residue R127 is modified to Arginine amide. A propeptide spanning residues 131 to 145 is cleaved from the precursor; sequence DFPEEVNIVEELRRR. Phosphoserine is present on residues S150 and S152.

This sequence belongs to the glucagon family. In terms of processing, proglucagon is post-translationally processed in a tissue-specific manner in pancreatic A cells and intestinal L cells. In pancreatic A cells, the major bioactive hormone is glucagon cleaved by PCSK2/PC2. In the intestinal L cells PCSK1/PC1 liberates GLP-1, GLP-2, glicentin and oxyntomodulin. GLP-1 is further N-terminally truncated by post-translational processing in the intestinal L cells resulting in GLP-1(7-37) GLP-1-(7-36)amide. The C-terminal amidation is neither important for the metabolism of GLP-1 nor for its effects on the endocrine pancreas. As to expression, glucagon is secreted in the A cells of the islets of Langerhans. GLP-1, GLP-2, oxyntomodulin and glicentin are secreted from enteroendocrine cells throughout the gastrointestinal tract. GLP-1 and GLP-2 are also secreted in selected neurons in the brain.

It localises to the secreted. Its function is as follows. Plays a key role in glucose metabolism and homeostasis. Regulates blood glucose by increasing gluconeogenesis and decreasing glycolysis. A counterregulatory hormone of insulin, raises plasma glucose levels in response to insulin-induced hypoglycemia. Plays an important role in initiating and maintaining hyperglycemic conditions in diabetes. Functionally, potent stimulator of glucose-dependent insulin release. Also stimulates insulin release in response to IL6. Plays important roles on gastric motility and the suppression of plasma glucagon levels. May be involved in the suppression of satiety and stimulation of glucose disposal in peripheral tissues, independent of the actions of insulin. Has growth-promoting activities on intestinal epithelium. May also regulate the hypothalamic pituitary axis (HPA) via effects on LH, TSH, CRH, oxytocin, and vasopressin secretion. Increases islet mass through stimulation of islet neogenesis and pancreatic beta cell proliferation. Inhibits beta cell apoptosis. Stimulates intestinal growth and up-regulates villus height in the small intestine, concomitant with increased crypt cell proliferation and decreased enterocyte apoptosis. The gastrointestinal tract, from the stomach to the colon is the principal target for GLP-2 action. Plays a key role in nutrient homeostasis, enhancing nutrient assimilation through enhanced gastrointestinal function, as well as increasing nutrient disposal. Stimulates intestinal glucose transport and decreases mucosal permeability. In terms of biological role, significantly reduces food intake. Inhibits gastric emptying in humans. Suppression of gastric emptying may lead to increased gastric distension, which may contribute to satiety by causing a sensation of fullness. Its function is as follows. May modulate gastric acid secretion and the gastro-pyloro-duodenal activity. May play an important role in intestinal mucosal growth in the early period of life. The chain is Pro-glucagon (GCG) from Ovis aries (Sheep).